Consider the following 103-residue polypeptide: Large ribosomal subunit protein bL21 (103 aa).

Belongs to the bacterial ribosomal protein bL21 family. In terms of assembly, part of the 50S ribosomal subunit. Contacts protein L20.

Its function is as follows. This protein binds to 23S rRNA in the presence of protein L20. The sequence is that of Large ribosomal subunit protein bL21 from Shigella sonnei (strain Ss046).